A 331-amino-acid polypeptide reads, in one-letter code: Probable cytosolic iron-sulfur protein assembly protein Ciao1 (331 aa).

WD repeat units lie at residues glycine 12–lysine 51, glycine 57–glutamate 96, glycine 97–cysteine 136, alanine 142–aspartate 181, serine 188–glycine 227, glutamate 246–alanine 285, and alanine 297–glutamate 331.

This sequence belongs to the WD repeat CIA1 family.

Functionally, essential component of the cytosolic iron-sulfur (Fe/S) protein assembly machinery. Required for the maturation of extramitochondrial Fe/S proteins. This Drosophila virilis (Fruit fly) protein is Probable cytosolic iron-sulfur protein assembly protein Ciao1.